The sequence spans 345 residues: SLAM family member 5 (345 aa).

Positions 1-21 (MAQHHLWILLLCLQTWPEAAG) are cleaved as a signal peptide. At 22–225 (KDSEIFTVNG…AMGFRTHHTG (204 aa)) the chain is on the extracellular side. Residues 26 to 129 (IFTVNGILGE…TTKRYNLQIY (104 aa)) enclose the Ig-like V-type domain. The region spanning 135-207 (PKITQSLMAS…PVSNNSDSIS (73 aa)) is the Ig-like C2-type domain. The N-linked (GlcNAc...) asparagine glycan is linked to Asn-150. A disulfide bridge links Cys-155 with Cys-193. A helical transmembrane segment spans residues 226-246 (LLSVLAMFFLLVLILSSVFLF). Topologically, residues 247 to 345 (RLFKRRQGRI…PGTSSYEIVI (99 aa)) are cytoplasmic. An ITSM 1 motif is present at residues 277-282 (TIYTYI). Residue Tyr-279 is modified to Phosphotyrosine. Tyr-296 carries the phosphotyrosine; by LYN modification. Residues 314-319 (TVYSEV) carry the ITSM 2 motif. The residue at position 316 (Tyr-316) is a Phosphotyrosine. The interval 326–345 (GKASTQDSKPPGTSSYEIVI) is disordered. The span at 328–345 (ASTQDSKPPGTSSYEIVI) shows a compositional bias: polar residues. Phosphotyrosine; by FES is present on Tyr-341.

In terms of assembly, homodimer; via its extracellular domain. Forms a head to tail dimer with a CD48 molecule from another cell. Interacts with SH2 domain-containing proteins SH2D1A/SAP and SH2D1B/EAT-2. Interacts with tyrosine-protein phosphatases PTPN6/SHP-1 and PTPN11//SHP-2 via its phosphorylated cytoplasmic domain, and this interaction is blocked by SH2D1A. Interacts (via phosphorylated ITSM 1 and 2) with INPP5D/SHIP1. Post-translationally, phosphorylated by tyrosine-protein kinase LCK on tyrosine residues following ligation induced by agonist monoclonal antibody. The association with SH2D1A is dependent of tyrosine phosphorylation of its cytoplasmic domain. Phosphorylated on Tyr-296 and Tyr-316 following platelet aggregation. Phosphorylated on tyrosine residues upon high affinity immunoglobulin epsilon receptor aggregation in mast cells. N-glycosylated. As to expression, predominantly expressed in hematopoietic tissues, such as lymph node, spleen and peripheral leukocytes. Expressed in macrophages, B-cells, monocytes, platelets, thymocytes, T-cells and dendritic cells. Highly expressed in memory T-cells. Expressed in mast cells.

The protein localises to the cell membrane. In terms of biological role, self-ligand receptor of the signaling lymphocytic activation molecule (SLAM) family. SLAM receptors triggered by homo- or heterotypic cell-cell interactions are modulating the activation and differentiation of a wide variety of immune cells and thus are involved in the regulation and interconnection of both innate and adaptive immune response. Activities are controlled by presence or absence of small cytoplasmic adapter proteins, SH2D1A/SAP and/or SH2D1B/EAT-2. Can mediate natural killer (NK) cell cytotoxicity dependent on SH2D1A and SH2D1B. Increases proliferative responses of activated T-cells and SH2D1A/SAP does not seem be required for this process. Homophilic interactions enhance interferon gamma/IFNG secretion in lymphocytes and induce platelet stimulation via a SH2D1A-dependent pathway. May serve as a marker for hematopoietic progenitor cells Required for a prolonged T-cell:B-cell contact, optimal T follicular helper function, and germinal center formation. In germinal centers involved in maintaining B-cell tolerance and in preventing autoimmunity. In mast cells negatively regulates high affinity immunoglobulin epsilon receptor signaling; independent of SH2D1A and SH2D1B but implicating FES and PTPN6/SHP-1. In macrophages enhances LPS-induced MAPK phosphorylation and NF-kappaB activation and modulates LPS-induced cytokine secretion; involving ITSM 2. Positively regulates macroautophagy in primary dendritic cells via stabilization of IRF8; inhibits TRIM21-mediated proteasomal degradation of IRF8. The polypeptide is SLAM family member 5 (CD84) (Homo sapiens (Human)).